Here is a 153-residue protein sequence, read N- to C-terminus: 3-hydroxyacyl-[acyl-carrier-protein] dehydratase FabZ (153 aa).

The active site involves His-57.

This sequence belongs to the thioester dehydratase family. FabZ subfamily.

The protein localises to the cytoplasm. It carries out the reaction a (3R)-hydroxyacyl-[ACP] = a (2E)-enoyl-[ACP] + H2O. Its function is as follows. Involved in unsaturated fatty acids biosynthesis. Catalyzes the dehydration of short chain beta-hydroxyacyl-ACPs and long chain saturated and unsaturated beta-hydroxyacyl-ACPs. The polypeptide is 3-hydroxyacyl-[acyl-carrier-protein] dehydratase FabZ (Xanthomonas campestris pv. campestris (strain 8004)).